The primary structure comprises 204 residues: Ribosomal RNA large subunit methyltransferase E (204 aa).

S-adenosyl-L-methionine-binding residues include Gly-49, Trp-51, Asp-69, Asn-87, and Asp-111. The active-site Proton acceptor is the Lys-151.

The protein belongs to the class I-like SAM-binding methyltransferase superfamily. RNA methyltransferase RlmE family.

The protein resides in the cytoplasm. The enzyme catalyses uridine(2552) in 23S rRNA + S-adenosyl-L-methionine = 2'-O-methyluridine(2552) in 23S rRNA + S-adenosyl-L-homocysteine + H(+). Specifically methylates the uridine in position 2552 of 23S rRNA at the 2'-O position of the ribose in the fully assembled 50S ribosomal subunit. This is Ribosomal RNA large subunit methyltransferase E from Nitratidesulfovibrio vulgaris (strain ATCC 29579 / DSM 644 / CCUG 34227 / NCIMB 8303 / VKM B-1760 / Hildenborough) (Desulfovibrio vulgaris).